The primary structure comprises 78 residues: Large ribosomal subunit protein bL28 (78 aa).

Residues 1-21 (MSKVCQVTGKRPITGHNVSHA) form a disordered region.

This sequence belongs to the bacterial ribosomal protein bL28 family.

This chain is Large ribosomal subunit protein bL28, found in Cellvibrio japonicus (strain Ueda107) (Pseudomonas fluorescens subsp. cellulosa).